Consider the following 518-residue polypeptide: Glucan 1,4-alpha-maltohexaosidase (518 aa).

The first 33 residues, 1–33 (MKMRTGKKGFLSILLAFLLVITSIPFTLVDVEA), serve as a signal peptide directing secretion. Ca(2+)-binding residues include Asn-139, Asp-196, Ala-219, Asp-221, Asp-232, Asp-238, Asp-240, and Asp-242. Position 196 (Asp-196) interacts with Na(+). The Na(+) site is built by Asp-221, Asp-232, and Asp-238. The active-site Nucleophile is the Asp-269. His-273 provides a ligand contact to Ca(2+). The active-site Proton donor is Glu-299.

This sequence belongs to the glycosyl hydrolase 13 family. The cofactor is Ca(2+). Na(+) is required as a cofactor.

The protein localises to the secreted. The enzyme catalyses Hydrolysis of (1-&gt;4)-alpha-D-glucosidic linkages in amylaceous polysaccharides, to remove successive maltohexaose residues from the non-reducing chain ends.. It functions in the pathway glycan degradation; starch degradation. The polypeptide is Glucan 1,4-alpha-maltohexaosidase (Bacillus sp. (strain 707)).